Here is a 754-residue protein sequence, read N- to C-terminus: Lysophospholipase 3 (754 aa).

The signal sequence occupies residues M1–A19. 2 stretches are compositionally biased toward low complexity: residues S25–G40 and L50–S88. Positions S25–S88 are disordered. N-linked (GlcNAc...) asparagine glycans are attached at residues N112, N156, N174, N317, N325, N354, N391, N423, N470, N510, N515, N560, N577, N597, N625, and N631. The 557-residue stretch at T114 to K670 folds into the PLA2c domain. Over residues K687–S721 the composition is skewed to low complexity. The interval K687–G727 is disordered.

This sequence belongs to the lysophospholipase family.

Its subcellular location is the secreted. It catalyses the reaction a 1-acyl-sn-glycero-3-phosphocholine + H2O = sn-glycerol 3-phosphocholine + a fatty acid + H(+). In terms of biological role, catalyzes the release of fatty acids from lysophospholipids. Phospholipase B may well contribute to pathogenicity by abetting the fungus in damaging and traversing host cell membranes, processes which likely increase the rapidity of disseminated infection. The sequence is that of Lysophospholipase 3 (PLB3) from Candida albicans (Yeast).